The primary structure comprises 106 residues: UPF0145 protein PputGB1_2909 (106 aa).

This sequence belongs to the UPF0145 family.

The chain is UPF0145 protein PputGB1_2909 from Pseudomonas putida (strain GB-1).